Reading from the N-terminus, the 97-residue chain is Osteocalcin (97 aa).

A signal peptide spans 1 to 18 (MKTLAFLVLCSLAAICLT). The propeptide occupies 19–52 (SDASTGSQPASDNPADEGMFVERDQASAVVRQKR). The Gla domain maps to 53–93 (AAGQLSLTQLESLREVCELNLACEHMMDTEGIIAAYTAYYG). Ca(2+)-binding residues include glutamate 63, glutamate 67, glutamate 70, and glutamate 76. 4-carboxyglutamate occurs at positions 63, 67, and 70. A disulfide bridge links cysteine 69 with cysteine 75.

It belongs to the osteocalcin/matrix Gla protein family. In terms of processing, gamma-carboxyglutamate residues are formed by vitamin K dependent carboxylation by GGCX. These residues are essential for the binding of calcium.

The protein resides in the secreted. Functionally, the carboxylated form is one of the main organic components of the bone matrix, which constitutes 1-2% of the total bone protein. The carboxylated form binds strongly to apatite and calcium. In Sparus aurata (Gilthead sea bream), this protein is Osteocalcin (bglap).